The primary structure comprises 107 residues: Flagellar hook-basal body complex protein FliE (107 aa).

It belongs to the FliE family.

The protein resides in the bacterial flagellum basal body. The protein is Flagellar hook-basal body complex protein FliE of Sodalis glossinidius (strain morsitans).